A 291-amino-acid polypeptide reads, in one-letter code: MKISITAPAKINLSLDALYKREDGYHEVEMVMTTIDLADRLFLERLDEDKIVLDVKAHFIPEDRRNLIYQAALLLKNRFNIKMGVRITIDKHIPVSAGLAGGSSDAAAALKGLNIIWELGLSIEELAEISSEIGSDIAFCVYGGTALATGRGEKISALPNMPGCWIVLAKPSISVSTPTIYKELQVDNVEHPNTEKMIESIKNGDLDGIFASTGNVLESVTLEKNPQVKRIKDRMLAFGAEAALMSGSGPTVFALIKQYSRAKRVYNGLRGFCEEVYMVRPWSESENDTIN.

The active site involves Lys-10. 94 to 104 (PVSAGLAGGSS) is a binding site for ATP. Asp-136 is a catalytic residue.

This sequence belongs to the GHMP kinase family. IspE subfamily.

The enzyme catalyses 4-CDP-2-C-methyl-D-erythritol + ATP = 4-CDP-2-C-methyl-D-erythritol 2-phosphate + ADP + H(+). Its pathway is isoprenoid biosynthesis; isopentenyl diphosphate biosynthesis via DXP pathway; isopentenyl diphosphate from 1-deoxy-D-xylulose 5-phosphate: step 3/6. Functionally, catalyzes the phosphorylation of the position 2 hydroxy group of 4-diphosphocytidyl-2C-methyl-D-erythritol. This is 4-diphosphocytidyl-2-C-methyl-D-erythritol kinase from Listeria innocua serovar 6a (strain ATCC BAA-680 / CLIP 11262).